We begin with the raw amino-acid sequence, 675 residues long: UvrABC system protein B (675 aa).

The 386-residue stretch at 32 to 417 folds into the Helicase ATP-binding domain; it reads EGLSDGLAYQ…EHAGQVVEQV (386 aa). Residue 45–52 participates in ATP binding; it reads GVTGSGKT. The Beta-hairpin signature appears at 98–121; the sequence is YYDYYQPEAYVPSRDLFIEKDSAI. The 167-residue stretch at 436 to 602 folds into the Helicase C-terminal domain; sequence QVDDLMSEIN…QIKKQVKDII (167 aa). One can recognise a UVR domain in the interval 634–669; sequence IKEIAKLEKAMQQAARDLQFEEAAVLRDRISNIKEN.

It belongs to the UvrB family. As to quaternary structure, forms a heterotetramer with UvrA during the search for lesions. Interacts with UvrC in an incision complex.

It localises to the cytoplasm. The UvrABC repair system catalyzes the recognition and processing of DNA lesions. A damage recognition complex composed of 2 UvrA and 2 UvrB subunits scans DNA for abnormalities. Upon binding of the UvrA(2)B(2) complex to a putative damaged site, the DNA wraps around one UvrB monomer. DNA wrap is dependent on ATP binding by UvrB and probably causes local melting of the DNA helix, facilitating insertion of UvrB beta-hairpin between the DNA strands. Then UvrB probes one DNA strand for the presence of a lesion. If a lesion is found the UvrA subunits dissociate and the UvrB-DNA preincision complex is formed. This complex is subsequently bound by UvrC and the second UvrB is released. If no lesion is found, the DNA wraps around the other UvrB subunit that will check the other stand for damage. This chain is UvrABC system protein B, found in Neisseria gonorrhoeae (strain ATCC 700825 / FA 1090).